Consider the following 244-residue polypeptide: Leucyl/phenylalanyl-tRNA--protein transferase (244 aa).

The protein belongs to the L/F-transferase family.

It is found in the cytoplasm. It catalyses the reaction N-terminal L-lysyl-[protein] + L-leucyl-tRNA(Leu) = N-terminal L-leucyl-L-lysyl-[protein] + tRNA(Leu) + H(+). It carries out the reaction N-terminal L-arginyl-[protein] + L-leucyl-tRNA(Leu) = N-terminal L-leucyl-L-arginyl-[protein] + tRNA(Leu) + H(+). The enzyme catalyses L-phenylalanyl-tRNA(Phe) + an N-terminal L-alpha-aminoacyl-[protein] = an N-terminal L-phenylalanyl-L-alpha-aminoacyl-[protein] + tRNA(Phe). Functions in the N-end rule pathway of protein degradation where it conjugates Leu, Phe and, less efficiently, Met from aminoacyl-tRNAs to the N-termini of proteins containing an N-terminal arginine or lysine. The polypeptide is Leucyl/phenylalanyl-tRNA--protein transferase (Thermodesulfovibrio yellowstonii (strain ATCC 51303 / DSM 11347 / YP87)).